A 483-amino-acid chain; its full sequence is Regulatory protein ViaA (483 aa).

Belongs to the ViaA family. Homodimer. Interacts with RavA.

The protein localises to the cytoplasm. In terms of biological role, component of the RavA-ViaA chaperone complex, which may act on the membrane to optimize the function of some of the respiratory chains. ViaA stimulates the ATPase activity of RavA. The chain is Regulatory protein ViaA from Salmonella heidelberg (strain SL476).